A 253-amino-acid chain; its full sequence is MRVSQTYGLVLYNRNYREDDKLVKIFTETEGKRMFFVKHASKSKFNAVLQPLTIAHFILKINDNGLSYIDDYKEVLAFQEINSDLFKLSYASYITSLADVAISDNVADAQLFIFLKKTLELIEDGLDYEILTNIFEVQLLERFGVALNFHDCVFCHRAGLPFDFSHKYSGLLCPNHYYKDERRNHLDPNMLHLINRFQSIQFDDLQTISVKPEMKLKIRQFLDMIYDEYVGIHLKSKKFIDDLSSWGSIMKSD.

This sequence belongs to the RecO family.

Functionally, involved in DNA repair and RecF pathway recombination. This Streptococcus agalactiae serotype Ia (strain ATCC 27591 / A909 / CDC SS700) protein is DNA repair protein RecO.